Reading from the N-terminus, the 77-residue chain is Acyl carrier protein (77 aa).

In terms of domain architecture, Carrier spans 1–76 (MENFDKVKDI…DAVKFINSLE (76 aa)). The residue at position 36 (Ser-36) is an O-(pantetheine 4'-phosphoryl)serine.

Belongs to the acyl carrier protein (ACP) family. 4'-phosphopantetheine is transferred from CoA to a specific serine of apo-ACP by AcpS. This modification is essential for activity because fatty acids are bound in thioester linkage to the sulfhydryl of the prosthetic group.

Its subcellular location is the cytoplasm. The protein operates within lipid metabolism; fatty acid biosynthesis. In terms of biological role, carrier of the growing fatty acid chain in fatty acid biosynthesis. This chain is Acyl carrier protein, found in Staphylococcus aureus (strain Mu3 / ATCC 700698).